We begin with the raw amino-acid sequence, 324 residues long: tRNA pseudouridine synthase B (324 aa).

Asp-49 functions as the Nucleophile in the catalytic mechanism.

Belongs to the pseudouridine synthase TruB family. Type 1 subfamily.

The catalysed reaction is uridine(55) in tRNA = pseudouridine(55) in tRNA. Functionally, responsible for synthesis of pseudouridine from uracil-55 in the psi GC loop of transfer RNAs. In Brucella anthropi (strain ATCC 49188 / DSM 6882 / CCUG 24695 / JCM 21032 / LMG 3331 / NBRC 15819 / NCTC 12168 / Alc 37) (Ochrobactrum anthropi), this protein is tRNA pseudouridine synthase B.